We begin with the raw amino-acid sequence, 274 residues long: Penicillin-insensitive murein endopeptidase (274 aa).

A signal peptide spans 1-19; sequence MNKTAIALLALLASSASLA. 3 disulfides stabilise this stretch: Cys44–Cys265, Cys187–Cys235, and Cys216–Cys223. Zn(2+) contacts are provided by His110, His113, Asp120, Asp147, His150, and His211. A disordered region spans residues 228-265; the sequence is LPPPGDGCGAELQSWFAPPKPGTTKPEKKTPPPLPPSC.

Belongs to the peptidase M74 family. Dimer. It depends on Zn(2+) as a cofactor.

Its subcellular location is the periplasm. Murein endopeptidase that cleaves the D-alanyl-meso-2,6-diamino-pimelyl amide bond that connects peptidoglycan strands. Likely plays a role in the removal of murein from the sacculus. This Shigella boydii serotype 18 (strain CDC 3083-94 / BS512) protein is Penicillin-insensitive murein endopeptidase.